Consider the following 136-residue polypeptide: Large ribosomal subunit protein uL16 (136 aa).

Belongs to the universal ribosomal protein uL16 family. As to quaternary structure, part of the 50S ribosomal subunit.

In terms of biological role, binds 23S rRNA and is also seen to make contacts with the A and possibly P site tRNAs. The sequence is that of Large ribosomal subunit protein uL16 from Actinobacillus succinogenes (strain ATCC 55618 / DSM 22257 / CCUG 43843 / 130Z).